The sequence spans 229 residues: UPF0228 protein MA_3119 (229 aa).

Positions 35 to 66 are enriched in low complexity; that stretch reads STPVNTSTPVNTSTPVNTSTPVNTSTPVSTST. The segment at 35-67 is disordered; it reads STPVNTSTPVNTSTPVNTSTPVNTSTPVSTSTI.

The protein belongs to the UPF0228 family.

The chain is UPF0228 protein MA_3119 from Methanosarcina acetivorans (strain ATCC 35395 / DSM 2834 / JCM 12185 / C2A).